We begin with the raw amino-acid sequence, 477 residues long: Glycogen synthase (477 aa).

Lysine 15 is an ADP-alpha-D-glucose binding site.

Belongs to the glycosyltransferase 1 family. Bacterial/plant glycogen synthase subfamily.

It carries out the reaction [(1-&gt;4)-alpha-D-glucosyl](n) + ADP-alpha-D-glucose = [(1-&gt;4)-alpha-D-glucosyl](n+1) + ADP + H(+). It participates in glycan biosynthesis; glycogen biosynthesis. Synthesizes alpha-1,4-glucan chains using ADP-glucose. The sequence is that of Glycogen synthase from Shigella boydii serotype 4 (strain Sb227).